A 968-amino-acid polypeptide reads, in one-letter code: RNA polymerase-associated protein RapA (968 aa).

A Helicase ATP-binding domain is found at 164-334 (DVGRRHAPRV…FARLRLLDPS (171 aa)). 177 to 184 (DEVGLGKT) serves as a coordination point for ATP. A DEAH box motif is present at residues 280 to 283 (DEAH). Residues 490–644 (RVEWLMGHLT…TCPTGRAIYD (155 aa)) enclose the Helicase C-terminal domain.

It belongs to the SNF2/RAD54 helicase family. RapA subfamily. Interacts with the RNAP. Has a higher affinity for the core RNAP than for the holoenzyme. Its ATPase activity is stimulated by binding to RNAP.

Its function is as follows. Transcription regulator that activates transcription by stimulating RNA polymerase (RNAP) recycling in case of stress conditions such as supercoiled DNA or high salt concentrations. Probably acts by releasing the RNAP, when it is trapped or immobilized on tightly supercoiled DNA. Does not activate transcription on linear DNA. Probably not involved in DNA repair. This chain is RNA polymerase-associated protein RapA, found in Citrobacter koseri (strain ATCC BAA-895 / CDC 4225-83 / SGSC4696).